We begin with the raw amino-acid sequence, 269 residues long: Interleukin-1 beta (269 aa).

The propeptide occupies 1 to 112; the sequence is MAMVPEITCD…EEPITFKNCD (112 aa).

The protein belongs to the IL-1 family. Monomer. In its precursor form, weakly interacts with full-length MEFV; the mature cytokine does not interact at all. Interacts with integrins ITGAV:ITGBV and ITGA5:ITGB1; integrin-binding is required for IL1B signaling. Interacts with cargo receptor TMED10; the interaction is direct and is required for the secretion of IL1B mature form. Interacts with HSP90AB1; the interaction facilitates cargo translocation into the ERGIC. Interacts with HSP90B1; the interaction facilitates cargo translocation into the ERGIC.

It localises to the cytoplasm. It is found in the cytosol. The protein resides in the secreted. Its subcellular location is the lysosome. The protein localises to the extracellular exosome. In terms of biological role, potent pro-inflammatory cytokine. Initially discovered as the major endogenous pyrogen, induces prostaglandin synthesis, neutrophil influx and activation, T-cell activation and cytokine production, B-cell activation and antibody production, and fibroblast proliferation and collagen production. Promotes Th17 differentiation of T-cells. Synergizes with IL12/interleukin-12 to induce IFNG synthesis from T-helper 1 (Th1) cells. Plays a role in angiogenesis by inducing VEGF production synergistically with TNF and IL6. Involved in transduction of inflammation downstream of pyroptosis: its mature form is specifically released in the extracellular milieu by passing through the gasdermin-D (GSDMD) pore. This chain is Interleukin-1 beta (IL1B), found in Trichosurus vulpecula (Brush-tailed possum).